Consider the following 526-residue polypeptide: Glutamate--cysteine ligase (526 aa).

It belongs to the glutamate--cysteine ligase type 1 family. Type 1 subfamily.

The enzyme catalyses L-cysteine + L-glutamate + ATP = gamma-L-glutamyl-L-cysteine + ADP + phosphate + H(+). It participates in sulfur metabolism; glutathione biosynthesis; glutathione from L-cysteine and L-glutamate: step 1/2. In Shewanella amazonensis (strain ATCC BAA-1098 / SB2B), this protein is Glutamate--cysteine ligase.